The primary structure comprises 274 residues: Glutamate racemase (274 aa).

Substrate is bound by residues 9 to 10 and 41 to 42; these read DS and YG. The Proton donor/acceptor role is filled by Cys-73. 74 to 75 contributes to the substrate binding site; it reads NT. Residue Cys-183 is the Proton donor/acceptor of the active site. 184–185 lines the substrate pocket; the sequence is TH.

This sequence belongs to the aspartate/glutamate racemases family.

It catalyses the reaction L-glutamate = D-glutamate. Its pathway is cell wall biogenesis; peptidoglycan biosynthesis. Functionally, provides the (R)-glutamate required for cell wall biosynthesis. This chain is Glutamate racemase, found in Shewanella baltica (strain OS155 / ATCC BAA-1091).